The following is a 175-amino-acid chain: Peptide deformylase (175 aa).

The Fe cation site is built by Cys96 and His138. The active site involves Glu139. His142 contacts Fe cation.

The protein belongs to the polypeptide deformylase family. Requires Fe(2+) as cofactor.

The catalysed reaction is N-terminal N-formyl-L-methionyl-[peptide] + H2O = N-terminal L-methionyl-[peptide] + formate. In terms of biological role, removes the formyl group from the N-terminal Met of newly synthesized proteins. Requires at least a dipeptide for an efficient rate of reaction. N-terminal L-methionine is a prerequisite for activity but the enzyme has broad specificity at other positions. The sequence is that of Peptide deformylase from Helicobacter pylori (strain Shi470).